A 339-amino-acid polypeptide reads, in one-letter code: Phosphate acyltransferase (339 aa).

It belongs to the PlsX family. Homodimer. Probably interacts with PlsY.

Its subcellular location is the cytoplasm. It carries out the reaction a fatty acyl-[ACP] + phosphate = an acyl phosphate + holo-[ACP]. It functions in the pathway lipid metabolism; phospholipid metabolism. Its function is as follows. Catalyzes the reversible formation of acyl-phosphate (acyl-PO(4)) from acyl-[acyl-carrier-protein] (acyl-ACP). This enzyme utilizes acyl-ACP as fatty acyl donor, but not acyl-CoA. This is Phosphate acyltransferase from Pasteurella multocida (strain Pm70).